The sequence spans 97 residues: Small ribosomal subunit protein bS20 (97 aa).

It belongs to the bacterial ribosomal protein bS20 family.

Functionally, binds directly to 16S ribosomal RNA. This is Small ribosomal subunit protein bS20 from Prochlorococcus marinus subsp. pastoris (strain CCMP1986 / NIES-2087 / MED4).